A 107-amino-acid polypeptide reads, in one-letter code: Small ribosomal subunit protein bS18c (107 aa).

A compositionally biased stretch (basic residues) spans 85-95; the sequence is KKAQRFKRRQS. The disordered stretch occupies residues 85-107; the sequence is KKAQRFKRRQSTARTVGLRTRNK.

The protein belongs to the bacterial ribosomal protein bS18 family. Part of the 30S ribosomal subunit.

Its subcellular location is the plastid. The protein localises to the chloroplast. The polypeptide is Small ribosomal subunit protein bS18c (Oenothera argillicola (Appalachian evening primrose)).